The sequence spans 238 residues: uncharacterized protein (238 aa).

Transmembrane regions (helical) follow at residues 22–42, 49–69, 78–98, 105–125, 141–161, 166–186, and 208–228; these read VYGW…GLYA, LFSL…YIQA, AVMG…GTMV, FGGG…GLSA, ILML…VVSL, PLMY…LTVV, and LSLI…WYLL.

Belongs to the BI1 family.

The protein localises to the cell membrane. This is an uncharacterized protein from Chlamydia muridarum (strain MoPn / Nigg).